Reading from the N-terminus, the 317-residue chain is Small ribosomal subunit protein RACK1 (317 aa).

WD repeat units lie at residues 15–55 (GHNG…DNQY), 64–103 (GHSH…TTQR), 106–146 (GHKG…ATLT), 148–188 (HNDW…VNAD), 191–230 (GHTG…TLYT), 232–272 (EAKA…DELK), and 281–317 (AKDP…TPSA).

It belongs to the WD repeat G protein beta family. Ribosomal protein RACK1 subfamily. In terms of assembly, component of the small ribosomal subunit. Mature ribosomes consist of a small (40S) and a large (60S) subunit. The 40S subunit contains about 32 different proteins and 1 molecule of RNA (18S). The 60S subunit contains 45 different proteins and 3 molecules of RNA (25S, 5.8S and 5S).

Its subcellular location is the cytoplasm. Its function is as follows. Component of the ribosome, a large ribonucleoprotein complex responsible for the synthesis of proteins in the cell. The small ribosomal subunit (SSU) binds messenger RNAs (mRNAs) and translates the encoded message by selecting cognate aminoacyl-transfer RNA (tRNA) molecules. The large subunit (LSU) contains the ribosomal catalytic site termed the peptidyl transferase center (PTC), which catalyzes the formation of peptide bonds, thereby polymerizing the amino acids delivered by tRNAs into a polypeptide chain. The nascent polypeptides leave the ribosome through a tunnel in the LSU and interact with protein factors that function in enzymatic processing, targeting, and the membrane insertion of nascent chains at the exit of the ribosomal tunnel. Located at the head of the 40S ribosomal subunit in the vicinity of the mRNA exit channel, it serves as a scaffold protein that can recruit other proteins to the ribosome. Involved in the negative regulation of translation of a specific subset of proteins. Plays a role in morphogenesis and pathogenesis. This Candida albicans (strain SC5314 / ATCC MYA-2876) (Yeast) protein is Small ribosomal subunit protein RACK1.